The sequence spans 261 residues: Hydroxyethylthiazole kinase (261 aa).

Position 39 (Met39) interacts with substrate. ATP contacts are provided by Arg115 and Thr159. Position 186 (Gly186) interacts with substrate.

Belongs to the Thz kinase family. Requires Mg(2+) as cofactor.

It catalyses the reaction 5-(2-hydroxyethyl)-4-methylthiazole + ATP = 4-methyl-5-(2-phosphooxyethyl)-thiazole + ADP + H(+). Its pathway is cofactor biosynthesis; thiamine diphosphate biosynthesis; 4-methyl-5-(2-phosphoethyl)-thiazole from 5-(2-hydroxyethyl)-4-methylthiazole: step 1/1. In terms of biological role, catalyzes the phosphorylation of the hydroxyl group of 4-methyl-5-beta-hydroxyethylthiazole (THZ). This Macrococcus caseolyticus (strain JCSC5402) (Macrococcoides caseolyticum) protein is Hydroxyethylthiazole kinase.